The sequence spans 156 residues: Transcription antitermination protein NusB (156 aa).

Belongs to the NusB family.

In terms of biological role, involved in transcription antitermination. Required for transcription of ribosomal RNA (rRNA) genes. Binds specifically to the boxA antiterminator sequence of the ribosomal RNA (rrn) operons. The chain is Transcription antitermination protein NusB from Xanthomonas oryzae pv. oryzae (strain MAFF 311018).